A 565-amino-acid chain; its full sequence is Adenine deaminase 1 (565 aa).

Belongs to the metallo-dependent hydrolases superfamily. Adenine deaminase family. It depends on Mn(2+) as a cofactor.

The catalysed reaction is adenine + H2O + H(+) = hypoxanthine + NH4(+). This Rhizobium etli (strain ATCC 51251 / DSM 11541 / JCM 21823 / NBRC 15573 / CFN 42) protein is Adenine deaminase 1.